Consider the following 284-residue polypeptide: Heat stress transcription factor B-1 (284 aa).

Residues 12–106 (PAPFLSKTYQ…LLTDIRRRKS (95 aa)) mediate DNA binding. The segment at 118–151 (VGSPSESNSGGGDDHGSSSTSSPGSSKNPGSVEN) is disordered. Over residues 134–148 (SSSTSSPGSSKNPGS) the composition is skewed to low complexity. The interval 147–192 (GSVENMVADLSGENEKLKRENNNLSSELAAAKKQRDELVTFLTGHL) is hydrophobic repeat HR-A/B. A Nuclear localization signal motif is present at residues 247–252 (RKKRDR).

Belongs to the HSF family. Class B subfamily. Homotrimer. In terms of processing, exhibits temperature-dependent phosphorylation.

Its subcellular location is the nucleus. Transcriptional regulator that specifically binds DNA sequence 5'-AGAAnnTTCT-3' known as heat shock promoter elements (HSE). The chain is Heat stress transcription factor B-1 (HSFB1) from Arabidopsis thaliana (Mouse-ear cress).